The chain runs to 205 residues: MDFSISTIALFTLLVSYLLGSLPSGYLAGKWILGIDLREIGSGSTGATNVLRHVGKTPALFVFFIDVTKGIGAILIAKSFLLDESLQIAAGLASLSGHIWPVWLKGKGGKAVATGLGVFLGISWQVGLGSLGIFLLILSIWRIVSLASISAAISLPVLMLINSKETFSIPYIVISFIAMILVLWRHRSNLIRLIKGQEPRIGKSN.

The next 6 helical transmembrane spans lie at 8–28 (IALF…GYLA), 57–77 (TPAL…ILIA), 84–104 (ESLQ…PVWL), 118–138 (VFLG…LLIL), 143–163 (IVSL…LINS), and 164–184 (KETF…LVLW).

It belongs to the PlsY family. As to quaternary structure, probably interacts with PlsX.

Its subcellular location is the cell inner membrane. The catalysed reaction is an acyl phosphate + sn-glycerol 3-phosphate = a 1-acyl-sn-glycero-3-phosphate + phosphate. Its pathway is lipid metabolism; phospholipid metabolism. Its function is as follows. Catalyzes the transfer of an acyl group from acyl-phosphate (acyl-PO(4)) to glycerol-3-phosphate (G3P) to form lysophosphatidic acid (LPA). This enzyme utilizes acyl-phosphate as fatty acyl donor, but not acyl-CoA or acyl-ACP. This Prochlorococcus marinus (strain SARG / CCMP1375 / SS120) protein is Glycerol-3-phosphate acyltransferase.